Consider the following 629-residue polypeptide: tRNA uridine 5-carboxymethylaminomethyl modification enzyme MnmG (629 aa).

Residues 13 to 18 (GGGHAG), V125, and S180 contribute to the FAD site. 273 to 287 (GPRYCPSIEDKVMRF) is an NAD(+) binding site. Residue Q370 participates in FAD binding.

This sequence belongs to the MnmG family. As to quaternary structure, homodimer. Heterotetramer of two MnmE and two MnmG subunits. It depends on FAD as a cofactor.

It is found in the cytoplasm. Its function is as follows. NAD-binding protein involved in the addition of a carboxymethylaminomethyl (cmnm) group at the wobble position (U34) of certain tRNAs, forming tRNA-cmnm(5)s(2)U34. In Aliivibrio fischeri (strain ATCC 700601 / ES114) (Vibrio fischeri), this protein is tRNA uridine 5-carboxymethylaminomethyl modification enzyme MnmG.